The chain runs to 878 residues: Phosphoenolpyruvate carboxylase (878 aa).

Catalysis depends on residues H138 and K545.

This sequence belongs to the PEPCase type 1 family. Mg(2+) serves as cofactor.

The catalysed reaction is oxaloacetate + phosphate = phosphoenolpyruvate + hydrogencarbonate. Its function is as follows. Forms oxaloacetate, a four-carbon dicarboxylic acid source for the tricarboxylic acid cycle. The polypeptide is Phosphoenolpyruvate carboxylase (Shewanella halifaxensis (strain HAW-EB4)).